A 202-amino-acid chain; its full sequence is FMN-dependent NADH:quinone oxidoreductase (202 aa).

Residues serine 9, 15 to 17 (SAS), 95 to 98 (MYNF), and 139 to 142 (TSGG) each bind FMN.

This sequence belongs to the azoreductase type 1 family. As to quaternary structure, homodimer. Requires FMN as cofactor.

It carries out the reaction 2 a quinone + NADH + H(+) = 2 a 1,4-benzosemiquinone + NAD(+). It catalyses the reaction N,N-dimethyl-1,4-phenylenediamine + anthranilate + 2 NAD(+) = 2-(4-dimethylaminophenyl)diazenylbenzoate + 2 NADH + 2 H(+). Quinone reductase that provides resistance to thiol-specific stress caused by electrophilic quinones. Its function is as follows. Also exhibits azoreductase activity. Catalyzes the reductive cleavage of the azo bond in aromatic azo compounds to the corresponding amines. The protein is FMN-dependent NADH:quinone oxidoreductase of Pseudomonas savastanoi pv. phaseolicola (strain 1448A / Race 6) (Pseudomonas syringae pv. phaseolicola (strain 1448A / Race 6)).